Reading from the N-terminus, the 243-residue chain is Uridylate kinase (243 aa).

Residue lysine 15–glycine 18 coordinates ATP. The interval glycine 23–glycine 28 is involved in allosteric activation by GTP. UMP is bound at residue glycine 57. Positions 58 and 62 each coordinate ATP. Residues aspartate 77 and threonine 138–threonine 145 each bind UMP. Residues threonine 165, phenylalanine 171, and aspartate 174 each coordinate ATP.

It belongs to the UMP kinase family. In terms of assembly, homohexamer.

The protein resides in the cytoplasm. It catalyses the reaction UMP + ATP = UDP + ADP. It functions in the pathway pyrimidine metabolism; CTP biosynthesis via de novo pathway; UDP from UMP (UMPK route): step 1/1. Its activity is regulated as follows. Allosterically activated by GTP. Inhibited by UTP. Functionally, catalyzes the reversible phosphorylation of UMP to UDP. The polypeptide is Uridylate kinase (Vibrio campbellii (strain ATCC BAA-1116)).